The following is a 564-amino-acid chain: Oxalyl-CoA decarboxylase (564 aa).

Substrate contacts are provided by isoleucine 32 and tyrosine 118. Residues arginine 158 and lysine 220 each coordinate ADP. Residue 261 to 265 coordinates substrate; that stretch reads AAARS. 3 residues coordinate ADP: arginine 280, aspartate 302, and isoleucine 322. Residue asparagine 355 coordinates substrate. Thiamine diphosphate-binding positions include tyrosine 372 and 396-398; that span reads ANT. 403–404 provides a ligand contact to substrate; that stretch reads RN. Residue 421-423 participates in thiamine diphosphate binding; the sequence is GVM. Mg(2+) is bound at residue aspartate 447. A thiamine diphosphate-binding site is contributed by 448–449; the sequence is SA. Residues asparagine 474 and glycine 476 each coordinate Mg(2+). Tyrosine 478 contacts thiamine diphosphate. A substrate-binding site is contributed by 550–552; that stretch reads SGH.

This sequence belongs to the TPP enzyme family. Homotetramer; dimer of dimers. The cofactor is Mg(2+). Thiamine diphosphate serves as cofactor.

It carries out the reaction oxalyl-CoA + H(+) = formyl-CoA + CO2. It functions in the pathway metabolic intermediate degradation; oxalate degradation; CO(2) and formate from oxalate: step 2/2. Its function is as follows. Involved in the catabolism of oxalate and in the adapatation to low pH via the induction of the oxalate-dependent acid tolerance response (ATR). Catalyzes the decarboxylation of oxalyl-CoA to yield carbon dioxide and formyl-CoA. The sequence is that of Oxalyl-CoA decarboxylase (oxc) from Escherichia coli O157:H7.